The chain runs to 224 residues: uncharacterized protein (224 aa).

Positions Met-1 to Ala-19 are cleaved as a signal peptide.

This sequence belongs to the periplasmic pilus chaperone family.

The protein resides in the periplasm. Could be required for the biogenesis of a putative fimbria. This is an uncharacterized protein from Escherichia coli (strain K12).